The primary structure comprises 670 residues: DNA ligase (670 aa).

NAD(+) contacts are provided by residues 32 to 36 (DSEYD), 81 to 82 (SL), and Glu114. Residue Lys116 is the N6-AMP-lysine intermediate of the active site. The NAD(+) site is built by Arg137, Glu174, Lys291, and Lys315. 4 residues coordinate Zn(2+): Cys409, Cys412, Cys427, and Cys433. Residues 592–670 (ASENLFKDKT…EEEFLAQITR (79 aa)) enclose the BRCT domain.

The protein belongs to the NAD-dependent DNA ligase family. LigA subfamily. Requires Mg(2+) as cofactor. Mn(2+) serves as cofactor.

The enzyme catalyses NAD(+) + (deoxyribonucleotide)n-3'-hydroxyl + 5'-phospho-(deoxyribonucleotide)m = (deoxyribonucleotide)n+m + AMP + beta-nicotinamide D-nucleotide.. Functionally, DNA ligase that catalyzes the formation of phosphodiester linkages between 5'-phosphoryl and 3'-hydroxyl groups in double-stranded DNA using NAD as a coenzyme and as the energy source for the reaction. It is essential for DNA replication and repair of damaged DNA. The protein is DNA ligase of Haemophilus influenzae (strain ATCC 51907 / DSM 11121 / KW20 / Rd).